Consider the following 344-residue polypeptide: Sorting nexin-16 (344 aa).

Positions 1 to 10 (MATPYVPVPM) are enriched in pro residues. The disordered stretch occupies residues 1 to 72 (MATPYVPVPM…SASSMCGSPL (72 aa)). The segment covering 14 to 26 (NSASSFTNNRNQR) has biased composition (polar residues). Low complexity predominate over residues 27–40 (SSSFGSVSTSSTSS). The span at 52–68 (LKQTNVQDQMDSASSMC) shows a compositional bias: polar residues. Positions 105–218 (DRPSTPTILG…EFLCLDDPPG (114 aa)) constitute a PX domain. A 1,2-diacyl-sn-glycero-3-phospho-(1D-myo-inositol-3-phosphate) is bound by residues Arg144, Thr146, and Arg184. The residue at position 222 (Ser222) is a Phosphoserine. Positions 223 to 278 (LEESRAFCETLEETNYHLQRELLEKQKEVESLKKLLGEKQLHIDALETRIRTLSLE) form a coiled coil.

This sequence belongs to the sorting nexin family. As to quaternary structure, homooligomer. Interacts with EGFR.

The protein localises to the early endosome membrane. Its subcellular location is the late endosome membrane. It localises to the cytoplasm. The protein resides in the lysosome. In terms of biological role, may be involved in several stages of intracellular trafficking. Plays a role in protein transport from early to late endosomes. Plays a role in protein transport to the lysosome. Promotes degradation of EGFR after EGF signaling. The chain is Sorting nexin-16 (Snx16) from Mus musculus (Mouse).